Here is a 337-residue protein sequence, read N- to C-terminus: Transaldolase (337 aa).

Residues 1-10 carry the Nuclear localization signal motif; that stretch reads MSGSPVKRQR. K115 carries the post-translational modification N6-acetyllysine. K142 functions as the Schiff-base intermediate with substrate in the catalytic mechanism. K219 carries the N6-acetyllysine modification. 2 positions are modified to phosphoserine: S237 and S256. Residues K269, K286, and K321 each carry the N6-acetyllysine modification.

The protein belongs to the transaldolase family. Type 1 subfamily. As to quaternary structure, homodimer. Interacts with KPNA1 and KPNA4.

It localises to the nucleus. The protein resides in the cytoplasm. The catalysed reaction is D-sedoheptulose 7-phosphate + D-glyceraldehyde 3-phosphate = D-erythrose 4-phosphate + beta-D-fructose 6-phosphate. It participates in carbohydrate degradation; pentose phosphate pathway; D-glyceraldehyde 3-phosphate and beta-D-fructose 6-phosphate from D-ribose 5-phosphate and D-xylulose 5-phosphate (non-oxidative stage): step 2/3. Functionally, catalyzes the rate-limiting step of the non-oxidative phase in the pentose phosphate pathway. Catalyzes the reversible conversion of sedheptulose-7-phosphate and D-glyceraldehyde 3-phosphate into erythrose-4-phosphate and beta-D-fructose 6-phosphate. The chain is Transaldolase (Taldo1) from Rattus norvegicus (Rat).